A 52-amino-acid polypeptide reads, in one-letter code: Large ribosomal subunit protein eL39 (52 aa).

This sequence belongs to the eukaryotic ribosomal protein eL39 family.

This chain is Large ribosomal subunit protein eL39 (RPL39), found in Tetrahymena thermophila (strain SB210).